We begin with the raw amino-acid sequence, 735 residues long: Translation initiation factor IF-2 (735 aa).

Composition is skewed to basic and acidic residues over residues 52–66 (VNSE…EKPK) and 101–117 (KGKE…EKKL). A disordered region spans residues 52–154 (VNSEKKAEKK…PAKKEKELPK (103 aa)). Residues 121–133 (AKKKGKGPMKGKK) are compositionally biased toward basic residues. Over residues 134 to 145 (QAAPASKQAQQP) the composition is skewed to low complexity. Positions 236-405 (ERPPVVTIMG…LLVSEMEELK (170 aa)) constitute a tr-type G domain. The tract at residues 245–252 (GHVDHGKT) is G1. 245–252 (GHVDHGKT) is a GTP binding site. The interval 270–274 (GITQH) is G2. The G3 stretch occupies residues 291-294 (DTPG). Residues 291–295 (DTPGH) and 345–348 (NKMD) each bind GTP. Residues 345 to 348 (NKMD) are G4. The tract at residues 381–383 (SAK) is G5.

The protein belongs to the TRAFAC class translation factor GTPase superfamily. Classic translation factor GTPase family. IF-2 subfamily.

It localises to the cytoplasm. Functionally, one of the essential components for the initiation of protein synthesis. Protects formylmethionyl-tRNA from spontaneous hydrolysis and promotes its binding to the 30S ribosomal subunits. Also involved in the hydrolysis of GTP during the formation of the 70S ribosomal complex. The polypeptide is Translation initiation factor IF-2 (Geobacillus thermodenitrificans (strain NG80-2)).